The following is a 2431-amino-acid chain: Histone-lysine N-methyltransferase trr (2431 aa).

Disordered regions lie at residues 34–78, 135–201, 213–235, and 759–789; these read LQKR…STAP, DADK…ENSG, ASGA…AGTP, and QSAN…TPMN. Residues 142–165 are compositionally biased toward polar residues; sequence YRISTPRNSQSNPLLHRNTAFTSF. Low complexity-rich tracts occupy residues 171–183, 218–235, and 767–787; these read ASSS…STAS, SSTS…AGTP, and ATST…NATP. Positions 801–805 match the LXXLL motif 1 motif; that stretch reads LKQLL. 5 disordered regions span residues 863–895, 918–973, 1226–1292, 1404–1433, and 1478–1500; these read PVPT…GGSS, VGGE…QVKQ, HPQQ…AGGA, TSGG…KGGS, and GLVG…AEKM. 3 stretches are compositionally biased toward low complexity: residues 866 to 895, 952 to 970, and 1226 to 1241; these read TATQ…GGSS, QQQQ…SPHQ, and HPQQ…QPQN. Over residues 1269–1281 the composition is skewed to basic residues; it reads RKRRKREVQKPRR. The segment covering 1410 to 1422 has biased composition (low complexity); it reads PASMSSAASAGSS. Positions 1423–1433 are enriched in gly residues; it reads SAGGGKLKGGS. Threonine 1486 carries the post-translational modification Phosphothreonine. Residues serine 1488 and serine 1490 each carry the phosphoserine modification. An LXXLL motif 2 motif is present at residues 1652-1656; it reads LANLL. The interval 1790-1836 is disordered; the sequence is GGSAVKSSNGDSPGSFCASSTAPAEMVVKQEPEDEDEKTPSVPGNPT. Over residues 1794–1811 the composition is skewed to polar residues; the sequence is VKSSNGDSPGSFCASSTA. The C2HC pre-PHD-type zinc-finger motif lies at 1895-1935; that stretch reads TRQCVFCNQRGDGQADGPSRLLNFDVDKWVHLNCALWSNGV. The segment at 1956 to 2003 adopts a PHD-type zinc-finger fold; it reads QACSACHQPGATIKCFKSRCNSLYHLPCAIREECVFYKNKSVHCSVHG. The LXXLL motif 3 signature appears at 2060-2064; that stretch reads LSNLL. Residues 2061–2121 enclose the FYR N-terminal domain; sequence SNLLRVGNMT…CRYICSIAEA (61 aa). The region spanning 2122–2209 is the FYR C-terminal domain; that stretch reads GCKPEFRIQV…ETLTDYRFKY (88 aa). The 117-residue stretch at 2291–2407 folds into the SET domain; sequence NNVYLARSKI…RGEELSYDYK (117 aa). One can recognise a Post-SET domain in the interval 2415 to 2431; sequence HKIPCACGAPNCRKWMN.

It belongs to the class V-like SAM-binding methyltransferase superfamily. Histone-lysine methyltransferase family. TRX/MLL subfamily. In terms of assembly, component of the MLL3/4 complex composed at least of the catalytic subunit trr, ash2, Rbbp5, Dpy-30L1, wds, hcf, ptip, Pa1, Utx, Lpt and Ncoa6. Interacts with nuclear receptor EcR in an ecdysone-dependent manner. Interacts with ash2; the interaction stabilizes trr. Widely expressed.

The protein resides in the nucleus. It localises to the chromosome. The catalysed reaction is L-lysyl(4)-[histone H3] + 3 S-adenosyl-L-methionine = N(6),N(6),N(6)-trimethyl-L-lysyl(4)-[histone H3] + 3 S-adenosyl-L-homocysteine + 3 H(+). Histone methyltransferase that acts as a coactivator for the ecdysone receptor during development. Specifically trimethylates 'Lys-4' of histone H3, a specific tag for epigenetic transcriptional activation. Recruited by EcR in an ecdysone-dependent manner causing H3 'Lys-4' trimethylation at ecdysone-inducible promoters, leading to activate expression. Plays a central role in the developing compound eye, during the progression of the morphogenetic furrow and in post-furrow differentiation of the retinal epithelium, notably by activating expression of hh. Also required for wing and abdominal development. This Drosophila melanogaster (Fruit fly) protein is Histone-lysine N-methyltransferase trr (trr).